The following is a 124-amino-acid chain: Glutaredoxin-2 (124 aa).

C13 and C16 are disulfide-bonded.

Belongs to the glutaredoxin family. As to quaternary structure, homodimer.

Its subcellular location is the host cytoplasm. In terms of biological role, glutaredoxin necessary for virion morphogenesis and virus replication. Functions as a thiol-disulfide transfer protein between membrane-associated OPG128 and substrates OPG095 or OPG053. The complete pathway for formation of disulfide bonds in intracellular virion membrane proteins sequentially involves oxidation of OPG072, OPG128 and OPG088. Exhibit thioltransferase and dehydroascorbate reductase activities in vitro. This chain is Glutaredoxin-2 (OPG088), found in Bos taurus (Bovine).